A 314-amino-acid chain; its full sequence is Ribonuclease Z (314 aa).

Zn(2+) contacts are provided by histidine 61, histidine 63, aspartate 65, histidine 66, histidine 137, aspartate 207, and histidine 263. Aspartate 65 acts as the Proton acceptor in catalysis.

The protein belongs to the RNase Z family. Homodimer. It depends on Zn(2+) as a cofactor.

It catalyses the reaction Endonucleolytic cleavage of RNA, removing extra 3' nucleotides from tRNA precursor, generating 3' termini of tRNAs. A 3'-hydroxy group is left at the tRNA terminus and a 5'-phosphoryl group is left at the trailer molecule.. Functionally, zinc phosphodiesterase, which displays some tRNA 3'-processing endonuclease activity. Probably involved in tRNA maturation, by removing a 3'-trailer from precursor tRNA. This Thermococcus kodakarensis (strain ATCC BAA-918 / JCM 12380 / KOD1) (Pyrococcus kodakaraensis (strain KOD1)) protein is Ribonuclease Z.